The primary structure comprises 311 residues: 2-methoxy-6-polyprenyl-1,4-benzoquinol methylase, mitochondrial (311 aa).

The N-terminal 29 residues, 1–29 (MAAGLCPGRALLSRRGGALWALLGTARGR), are a transit peptide targeting the mitochondrion. S-adenosyl-L-methionine-binding positions include threonine 100, aspartate 155, and 183–184 (NA).

The protein belongs to the class I-like SAM-binding methyltransferase superfamily. MenG/UbiE family. Component of a multi-subunit COQ enzyme complex, composed of at least COQ3, COQ4, COQ5, COQ6, COQ7 and COQ9.

Its subcellular location is the mitochondrion inner membrane. The catalysed reaction is a 2-methoxy-6-(all-trans-polyprenyl)benzene-1,4-diol + S-adenosyl-L-methionine = a 5-methoxy-2-methyl-3-(all-trans-polyprenyl)benzene-1,4-diol + S-adenosyl-L-homocysteine + H(+). It participates in cofactor biosynthesis; ubiquinone biosynthesis. Methyltransferase required for the conversion of 2-polyprenyl-6-methoxy-1,4-benzoquinol (DDMQH2) to 2-polyprenyl-3-methyl-6-methoxy-1,4-benzoquinol (DMQH2). The chain is 2-methoxy-6-polyprenyl-1,4-benzoquinol methylase, mitochondrial from Gallus gallus (Chicken).